A 141-amino-acid chain; its full sequence is Drosulfakinins (141 aa).

The signal sequence occupies residues 1 to 31 (MGLRRCTHFATLVMPLWALALFFLVVMQVPA). A propeptide spanning residues 32–73 (QTTSLQISKEDRRLQELESKMGAESEQPNANLVGPSISRFGD) is cleaved from the precursor. The tract at residues 49 to 69 (ESKMGAESEQPNANLVGPSIS) is disordered. Phenylalanine amide is present on Phe82. Residues 86–111 (VPLISRPMIPIELDLLMDNDDERTKA) constitute a propeptide that is removed on maturation. A Sulfotyrosine modification is found at Tyr117. Phenylalanine amide is present on Phe122. Tyr134 is modified (sulfotyrosine). A Phenylalanine amide modification is found at Phe139.

It belongs to the gastrin/cholecystokinin family.

It localises to the secreted. In terms of biological role, drosulfakinin-0 (DSK 0) plays diverse biological roles including regulating gut muscle contraction in adults but not in larvae. The chain is Drosulfakinins from Drosophila erecta (Fruit fly).